A 188-amino-acid chain; its full sequence is ATP synthase subunit b (188 aa).

Residues 7 to 26 (TAAAGAMTLFFASMAYASGD) traverse the membrane as a helical segment.

This sequence belongs to the ATPase B chain family. As to quaternary structure, F-type ATPases have 2 components, F(1) - the catalytic core - and F(0) - the membrane proton channel. F(1) has five subunits: alpha(3), beta(3), gamma(1), delta(1), epsilon(1). F(0) has three main subunits: a(1), b(2) and c(10-14). The alpha and beta chains form an alternating ring which encloses part of the gamma chain. F(1) is attached to F(0) by a central stalk formed by the gamma and epsilon chains, while a peripheral stalk is formed by the delta and b chains.

It is found in the cell inner membrane. F(1)F(0) ATP synthase produces ATP from ADP in the presence of a proton or sodium gradient. F-type ATPases consist of two structural domains, F(1) containing the extramembraneous catalytic core and F(0) containing the membrane proton channel, linked together by a central stalk and a peripheral stalk. During catalysis, ATP synthesis in the catalytic domain of F(1) is coupled via a rotary mechanism of the central stalk subunits to proton translocation. Functionally, component of the F(0) channel, it forms part of the peripheral stalk, linking F(1) to F(0). The chain is ATP synthase subunit b from Nitratidesulfovibrio vulgaris (strain DP4) (Desulfovibrio vulgaris).